The chain runs to 316 residues: MVKKNFIPSVSLVRRDLPTLVTTTTSSTALSKPTSSVVSETSSKSLPSLTSSAFSTSSGATSSSSLIVASITPPSTAGNPFILNAADKPNGTVYIAVGAVIGAIFISILIWWLVSSYLSRRFTMTNSYANDSKNLYRGHHKHSSSLQSNPFDINDEKSYMQDDWDSMSQLESSQYEDAASPFNPIQDPFTDNRRSLFISPTLQVSQYEKSHSRHQSKDTNIFIDDPFLYVGTYLEEEEEEEEERKLNLNRPQRAASPERKEKKINSMEGYHKRNQSSLGLIPVASATSNTSSPKKAHKRQAPSMFLDDVLNGREII.

A disordered region spans residues 32 to 60 (KPTSSVVSETSSKSLPSLTSSAFSTSSGA). The helical transmembrane segment at 93–113 (VYIAVGAVIGAIFISILIWWL) threads the bilayer. Phosphoserine is present on residues S148, S256, and S276. The disordered stretch occupies residues 240–304 (EEEERKLNLN…KAHKRQAPSM (65 aa)). Residues 256 to 271 (SPERKEKKINSMEGYH) show a composition bias toward basic and acidic residues.

This sequence belongs to the PRM5 family.

It is found in the vacuole membrane. The polypeptide is Vacuolar membrane protein YNL058C (Saccharomyces cerevisiae (strain ATCC 204508 / S288c) (Baker's yeast)).